The sequence spans 122 residues: HLLQFRKMIKKMTGKEPVISYAFYGCYCGSGGRGKPKDATDRCCFVHDCCYEKVTGCKPKWDDYTYSWKNGDIVCGGDDPCKKEICECDRAAAICFRDNLKTYKKRYMAYPDILCSSKSEKC.

7 disulfides stabilise this stretch: cysteine 26–cysteine 115, cysteine 28–cysteine 44, cysteine 43–cysteine 95, cysteine 49–cysteine 122, cysteine 50–cysteine 88, cysteine 57–cysteine 81, and cysteine 75–cysteine 86. Ca(2+)-binding residues include tyrosine 27, glycine 29, and glycine 31. The active site involves histidine 47. Aspartate 48 is a Ca(2+) binding site. Aspartate 89 is an active-site residue.

It belongs to the phospholipase A2 family. Group II subfamily. D49 sub-subfamily. Homodimer. Requires Ca(2+) as cofactor. In terms of tissue distribution, expressed by the venom gland.

The protein localises to the secreted. The enzyme catalyses a 1,2-diacyl-sn-glycero-3-phosphocholine + H2O = a 1-acyl-sn-glycero-3-phosphocholine + a fatty acid + H(+). Its function is as follows. Snake venom phospholipase A2 (PLA2) that inhibits neuromuscular transmission by blocking acetylcholine release from the nerve termini. PLA2 catalyzes the calcium-dependent hydrolysis of the 2-acyl groups in 3-sn-phosphoglycerides. The chain is Basic phospholipase A2 from Gloydius blomhoffii (Mamushi).